The sequence spans 477 residues: Aspartyl/glutamyl-tRNA(Asn/Gln) amidotransferase subunit B (477 aa).

Belongs to the GatB/GatE family. GatB subfamily. As to quaternary structure, heterotrimer of A, B and C subunits.

The enzyme catalyses L-glutamyl-tRNA(Gln) + L-glutamine + ATP + H2O = L-glutaminyl-tRNA(Gln) + L-glutamate + ADP + phosphate + H(+). The catalysed reaction is L-aspartyl-tRNA(Asn) + L-glutamine + ATP + H2O = L-asparaginyl-tRNA(Asn) + L-glutamate + ADP + phosphate + 2 H(+). Its function is as follows. Allows the formation of correctly charged Asn-tRNA(Asn) or Gln-tRNA(Gln) through the transamidation of misacylated Asp-tRNA(Asn) or Glu-tRNA(Gln) in organisms which lack either or both of asparaginyl-tRNA or glutaminyl-tRNA synthetases. The reaction takes place in the presence of glutamine and ATP through an activated phospho-Asp-tRNA(Asn) or phospho-Glu-tRNA(Gln). In Bdellovibrio bacteriovorus (strain ATCC 15356 / DSM 50701 / NCIMB 9529 / HD100), this protein is Aspartyl/glutamyl-tRNA(Asn/Gln) amidotransferase subunit B.